The sequence spans 450 residues: Sorting nexin-4 (450 aa).

The residue at position 1 (Met-1) is an N-acetylmethionine. Residues 1-46 (MEQAPPDPEKLLQPGPLEPLGGPGAVLEAAVGEENEGTREDGSGVD) are disordered. Residues 11 to 20 (LLQPGPLEPL) are compositionally biased toward low complexity. Residues 61-187 (SVSEAEKRTG…YSFLTQEGNW (127 aa)) form the PX domain. A 1,2-diacyl-sn-glycero-3-phospho-(1D-myo-inositol-3-phosphate)-binding residues include Arg-106, Ser-108, Lys-132, and Arg-154.

The protein belongs to the sorting nexin family. Heterodimer; heterodimerizes with SNX7 or SNX30. Interacts with WWC1/KIBRA. Identified in a complex with WWC1/KIBRA and dynein components DYNLL1 and DYNC1I2. Interacts with BIN1.

It localises to the early endosome. It is found in the early endosome membrane. In terms of biological role, involved in the regulation of endocytosis and in several stages of intracellular trafficking. Plays a role in recycling endocytosed transferrin receptor and prevent its degradation. Involved in autophagosome assembly by regulating trafficking and recycling of phospholipid scramblase ATG9A. This chain is Sorting nexin-4, found in Mus musculus (Mouse).